Here is a 156-residue protein sequence, read N- to C-terminus: Large ribosomal subunit protein uL15 (156 aa).

The tract at residues 25–48 (RGIGCGKGKTSGRGHKGQKARSGV) is disordered. Positions 34–43 (TSGRGHKGQK) are enriched in basic residues.

The protein belongs to the universal ribosomal protein uL15 family. As to quaternary structure, part of the 50S ribosomal subunit.

Its function is as follows. Binds to the 23S rRNA. This Wolbachia pipientis subsp. Culex pipiens (strain wPip) protein is Large ribosomal subunit protein uL15.